The primary structure comprises 183 residues: A-type ATP synthase subunit E (183 aa).

This sequence belongs to the V-ATPase E subunit family. As to quaternary structure, has multiple subunits with at least A(3), B(3), C, D, E, F, H, I and proteolipid K(x).

It localises to the cell membrane. Functionally, component of the A-type ATP synthase that produces ATP from ADP in the presence of a proton gradient across the membrane. This chain is A-type ATP synthase subunit E, found in Methanosarcina acetivorans (strain ATCC 35395 / DSM 2834 / JCM 12185 / C2A).